The primary structure comprises 478 residues: RNA pseudouridine synthase 3, mitochondrial (478 aa).

The N-terminal 20 residues, 1-20 (MWKAKTCFRQIYLTVLIRRY), are a transit peptide targeting the mitochondrion. The 71-residue stretch at 92–162 (EEIYDKAIQT…MRISKRYDTI (71 aa)) folds into the S4 RNA-binding domain. Residue aspartate 232 is part of the active site.

The protein belongs to the pseudouridine synthase RluA family.

The protein localises to the mitochondrion. It catalyses the reaction a uridine in RNA = a pseudouridine in RNA. The polypeptide is RNA pseudouridine synthase 3, mitochondrial (Arabidopsis thaliana (Mouse-ear cress)).